We begin with the raw amino-acid sequence, 550 residues long: Amino acid transporter AVT1C (550 aa).

Over residues 1-11 (MNHVPSDQSFY) the composition is skewed to polar residues. Disordered stretches follow at residues 1 to 44 (MNHV…ENQA) and 128 to 148 (QGLL…EKSS). A compositionally biased stretch (basic and acidic residues) spans 20–34 (RKDYVEEDGGSHSDS). The next 11 membrane-spanning stretches (helical) occupy residues 165-185 (AVLN…PYAA), 190-210 (WLGL…GILL), 237-257 (IFVS…YIIL), 283-303 (LFAL…DLSV), 307-327 (ISAG…WIGL), 342-362 (LSTL…HAVF), 377-397 (AVLL…AVMG), 422-442 (IAVW…ISPV), 462-484 (IGIR…FFGL), 488-510 (LIGS…LSIV), and 521-541 (LCVL…YSAL).

Belongs to the amino acid/polyamine transporter 2 family. Amino acid/auxin permease (AAAP) (TC 2.A.18.5) subfamily.

It is found in the membrane. The protein is Amino acid transporter AVT1C of Arabidopsis thaliana (Mouse-ear cress).